The sequence spans 116 residues: Large ribosomal subunit protein uL23 (116 aa).

It belongs to the universal ribosomal protein uL23 family. Part of the 50S ribosomal subunit. Contacts protein L29, and trigger factor when it is bound to the ribosome.

Functionally, one of the early assembly proteins it binds 23S rRNA. One of the proteins that surrounds the polypeptide exit tunnel on the outside of the ribosome. Forms the main docking site for trigger factor binding to the ribosome. This Psychrobacter arcticus (strain DSM 17307 / VKM B-2377 / 273-4) protein is Large ribosomal subunit protein uL23.